A 178-amino-acid chain; its full sequence is Zinc finger protein ZAT11 (178 aa).

2 consecutive C2H2-type zinc fingers follow at residues 47–69 and 94–116; these read FECK…RASH and HKCS…MRRH.

As to expression, expressed in leaves.

It localises to the nucleus. In terms of biological role, probable transcription factor that may be involved in stress responses. This is Zinc finger protein ZAT11 (ZAT11) from Arabidopsis thaliana (Mouse-ear cress).